The chain runs to 493 residues: Galactose-1-phosphate uridylyltransferase (493 aa).

It belongs to the galactose-1-phosphate uridylyltransferase type 2 family.

The protein resides in the cytoplasm. The catalysed reaction is alpha-D-galactose 1-phosphate + UDP-alpha-D-glucose = alpha-D-glucose 1-phosphate + UDP-alpha-D-galactose. It functions in the pathway carbohydrate metabolism; galactose metabolism. This is Galactose-1-phosphate uridylyltransferase (galT) from Lactococcus lactis subsp. lactis (strain IL1403) (Streptococcus lactis).